The chain runs to 267 residues: Cell division protein FtsQ (267 aa).

At 1-32 (MRQKTISNKNKQTKNTNNISLRRKLGLMYKKA) the chain is on the cytoplasmic side. Residues 33-53 (ILVLKIVLMIFVCLFVFTKYF) traverse the membrane as a helical segment. Residues 54–267 (TSIKTYLITN…DRNKYYIQKY (214 aa)) are Periplasmic-facing. The POTRA domain maps to 73-141 (FRLENVIIEG…NTVYIKLFER (69 aa)).

The protein belongs to the FtsQ/DivIB family. FtsQ subfamily.

It localises to the cell inner membrane. Essential cell division protein. The sequence is that of Cell division protein FtsQ from Rickettsia prowazekii (strain Madrid E).